A 468-amino-acid polypeptide reads, in one-letter code: Argininosuccinate lyase (468 aa).

It belongs to the lyase 1 family. Argininosuccinate lyase subfamily.

It is found in the cytoplasm. The catalysed reaction is 2-(N(omega)-L-arginino)succinate = fumarate + L-arginine. It functions in the pathway amino-acid biosynthesis; L-arginine biosynthesis; L-arginine from L-ornithine and carbamoyl phosphate: step 3/3. The protein is Argininosuccinate lyase of Paraburkholderia phymatum (strain DSM 17167 / CIP 108236 / LMG 21445 / STM815) (Burkholderia phymatum).